The following is a 389-amino-acid chain: Leucine aminopeptidase 1 (389 aa).

The signal sequence occupies residues 1-19; sequence MKLPALLTLGVAASTMVLA. Residues 20-88 constitute a propeptide that is removed on maturation; it reads AIAPDQVPLN…LPKVFPTPAV (69 aa). Residues Asn-96, Asn-119, Asn-149, Asn-164, and Asn-181 are each glycosylated (N-linked (GlcNAc...) asparagine). Positions 189 and 208 each coordinate Zn(2+). The N-linked (GlcNAc...) asparagine glycan is linked to Asn-233. Residues Glu-247 and Asp-274 each coordinate Zn(2+). Cysteines 323 and 327 form a disulfide. Zn(2+) is bound at residue His-356.

It belongs to the peptidase M28 family. M28E subfamily. Monomer. It depends on Zn(2+) as a cofactor.

The protein resides in the secreted. Its function is as follows. Extracellular aminopeptidase that allows assimilation of proteinaceous substrates. This chain is Leucine aminopeptidase 1 (LAP1), found in Paracoccidioides brasiliensis (strain Pb18).